A 113-amino-acid chain; its full sequence is Nitrogenase vanadium-iron protein delta chain (113 aa).

Hexamer of two alpha, two beta, and two delta chains. Requires iron-sulfur cluster as cofactor. Vanadium cation is required as a cofactor.

The enzyme catalyses N2 + 8 reduced [2Fe-2S]-[ferredoxin] + 16 ATP + 16 H2O = H2 + 8 oxidized [2Fe-2S]-[ferredoxin] + 2 NH4(+) + 16 ADP + 16 phosphate + 6 H(+). In terms of biological role, the key enzymatic reactions in nitrogen fixation are catalyzed by the nitrogenase complex, which has 2 components: the iron protein (component 2) and a component 1 which is either a molybdenum-iron protein, a vanadium-iron, or an iron-iron protein. This Azotobacter salinestris protein is Nitrogenase vanadium-iron protein delta chain (vnfG).